The primary structure comprises 2340 residues: Proto-oncogene tyrosine-protein kinase ROS (2340 aa).

Positions 1–28 are cleaved as a signal peptide; that stretch reads MKNICWLTLKLVKFVVLGCIIWISVAQS. The Extracellular segment spans residues 29 to 1854; sequence TVLSSCLTSC…EDGVWITETS (1826 aa). A glycan (N-linked (GlcNAc...) asparagine) is linked at N53. Fibronectin type-III domains lie at 111-206 and 207-295; these read LPTA…VPET and APLI…PSPS. N334 and N362 each carry an N-linked (GlcNAc...) asparagine glycan. The Fibronectin type-III 3 domain occupies 567–667; it reads LPGHPQEVSV…APSVGTTLVP (101 aa). Residues N935 and N1011 are each glycosylated (N-linked (GlcNAc...) asparagine). Fibronectin type-III domains lie at 943-1038 and 1039-1146; these read IPDP…SVPS and APEN…TSEI. N1243 carries an N-linked (GlcNAc...) asparagine glycan. 4 Fibronectin type-III domains span residues 1442–1549, 1550–1649, 1651–1744, and 1745–1846; these read ASDM…TKSG, VPGA…VNMF, TPEK…TKAG, and VPSK…LVED. N1676 is a glycosylation site (N-linked (GlcNAc...) asparagine). Residues 1855–1875 form a helical membrane-spanning segment; it reads FILTIIVGIFLVATVPLTFVW. Over 1876 to 2340 the chain is Cytoplasmic; that stretch reads HRSLKSHKAS…AHSEHGDVSE (465 aa). The 279-residue stretch at 1938–2216 folds into the Protein kinase domain; sequence LSLRLLLGSG…QLQLFRNVFL (279 aa). ATP contacts are provided by residues 1944–1952 and K1973; that span reads LGSGAFGEV. D2072 serves as the catalytic Proton acceptor. Residues Y2267 and Y2327 each carry the phosphotyrosine; by autocatalysis modification.

This sequence belongs to the protein kinase superfamily. Tyr protein kinase family. Insulin receptor subfamily. As to quaternary structure, interacts with PTPN11; may activate the PI3 kinase-mTOR signaling pathway. Interacts with VAV3; constitutive interaction mediating VAV3 phosphorylation. Interacts with PTPN6 (via SH2 1 domain); the interaction is direct and promotes ROS1 dephosphorylation. In terms of processing, phosphorylated. Probably autophosphorylates. Phosphorylation at Tyr-2267 and/or Tyr-2327 recruits PTPN11. Phosphorylation at Tyr-2267 is required for the interaction with PTPN6 that mediates ROS1 dephosphorylation. Phosphorylation at Tyr-2267 stimulates the kinase activity and the activation of the ERK1 signaling cascade. In terms of tissue distribution, expressed by epithelial cells of the caput epididymis (at protein level).

The protein resides in the cell membrane. The enzyme catalyses L-tyrosyl-[protein] + ATP = O-phospho-L-tyrosyl-[protein] + ADP + H(+). Inhibited by dephosphorylation by PTPN6. Functionally, receptor tyrosine kinase (RTK) that plays a role in epithelial cell differentiation and regionalization of the proximal epididymal epithelium. NELL2 is an endogenous ligand for ROS1. Upon endogenous stimulation by NELL2, ROS1 activates the intracellular signaling pathway and triggers epididymal epithelial differentiation and subsequent sperm maturation. May activate several downstream signaling pathways related to cell differentiation, proliferation, growth and survival including the PI3 kinase-mTOR signaling pathway. Mediates the phosphorylation of PTPN11, an activator of this pathway. May also phosphorylate and activate the transcription factor STAT3 to control anchorage-independent cell growth. Mediates the phosphorylation and the activation of VAV3, a guanine nucleotide exchange factor regulating cell morphology. May activate other downstream signaling proteins including AKT1, MAPK1, MAPK3, IRS1, and PLCG2. The polypeptide is Proto-oncogene tyrosine-protein kinase ROS (Ros1) (Mus musculus (Mouse)).